A 262-amino-acid chain; its full sequence is Hydroxyethylthiazole kinase (262 aa).

Met-40 provides a ligand contact to substrate. ATP is bound by residues Lys-116 and Thr-162. Gly-189 contributes to the substrate binding site.

It belongs to the Thz kinase family. It depends on Mg(2+) as a cofactor.

It carries out the reaction 5-(2-hydroxyethyl)-4-methylthiazole + ATP = 4-methyl-5-(2-phosphooxyethyl)-thiazole + ADP + H(+). It participates in cofactor biosynthesis; thiamine diphosphate biosynthesis; 4-methyl-5-(2-phosphoethyl)-thiazole from 5-(2-hydroxyethyl)-4-methylthiazole: step 1/1. Catalyzes the phosphorylation of the hydroxyl group of 4-methyl-5-beta-hydroxyethylthiazole (THZ). This chain is Hydroxyethylthiazole kinase, found in Clostridioides difficile (strain 630) (Peptoclostridium difficile).